The primary structure comprises 334 residues: Mevalonate kinase (334 aa).

110–120 (PVGAGLGSSAA) is a binding site for ATP. Aspartate 161 serves as the catalytic Proton acceptor.

The protein belongs to the GHMP kinase family. Mevalonate kinase subfamily. As to quaternary structure, homodimer. Mg(2+) is required as a cofactor.

Its subcellular location is the cytoplasm. The catalysed reaction is (R)-mevalonate + ATP = (R)-5-phosphomevalonate + ADP + H(+). The protein operates within isoprenoid biosynthesis; isopentenyl diphosphate biosynthesis via mevalonate pathway; isopentenyl diphosphate from (R)-mevalonate: step 1/3. Catalyzes the phosphorylation of (R)-mevalonate (MVA) to (R)-mevalonate 5-phosphate (MVAP). Functions in the mevalonate (MVA) pathway leading to isopentenyl diphosphate (IPP), a key precursor for the biosynthesis of isoprenoid compounds such as archaeal membrane lipids. In Thermococcus gammatolerans (strain DSM 15229 / JCM 11827 / EJ3), this protein is Mevalonate kinase.